The sequence spans 175 residues: Colicin-B immunity protein (175 aa).

Helical transmembrane passes span 14–32 (ILYA…ILIL), 104–121 (CFWG…TLFY), and 149–168 (IYFT…LLVI).

It is found in the cell inner membrane. Functionally, this protein is able to protect a cell, which harbors the plasmid ColB encoding colicin B, against colicin B. In Escherichia coli, this protein is Colicin-B immunity protein (cbi).